A 385-amino-acid polypeptide reads, in one-letter code: 1-deoxy-D-xylulose 5-phosphate reductoisomerase (385 aa).

Threonine 10, glycine 11, serine 12, isoleucine 13, and asparagine 124 together coordinate NADPH. Lysine 125 is a 1-deoxy-D-xylulose 5-phosphate binding site. Glutamate 126 serves as a coordination point for NADPH. Residue aspartate 150 coordinates Mn(2+). 1-deoxy-D-xylulose 5-phosphate contacts are provided by serine 151, glutamate 152, serine 176, and histidine 199. Glutamate 152 contacts Mn(2+). Residue glycine 205 participates in NADPH binding. The 1-deoxy-D-xylulose 5-phosphate site is built by serine 212, asparagine 217, lysine 218, and glutamate 221. Glutamate 221 serves as a coordination point for Mn(2+).

It belongs to the DXR family. It depends on Mg(2+) as a cofactor. Mn(2+) serves as cofactor.

The catalysed reaction is 2-C-methyl-D-erythritol 4-phosphate + NADP(+) = 1-deoxy-D-xylulose 5-phosphate + NADPH + H(+). The protein operates within isoprenoid biosynthesis; isopentenyl diphosphate biosynthesis via DXP pathway; isopentenyl diphosphate from 1-deoxy-D-xylulose 5-phosphate: step 1/6. In terms of biological role, catalyzes the NADPH-dependent rearrangement and reduction of 1-deoxy-D-xylulose-5-phosphate (DXP) to 2-C-methyl-D-erythritol 4-phosphate (MEP). The sequence is that of 1-deoxy-D-xylulose 5-phosphate reductoisomerase from Clostridium botulinum (strain Eklund 17B / Type B).